Reading from the N-terminus, the 230-residue chain is Claudin-2 (230 aa).

At 1–7 (MASLGLQ) the chain is on the cytoplasmic side. The helical transmembrane segment at 8–28 (LVGYILGLLGLLGTLVAMLLP) threads the bilayer. At 29–81 (SWKTSSYVGASIVTAVGFSKGLWMECATHSTGITQCDIYSTLLGLPADIQAAQ) the chain is on the extracellular side. An intrachain disulfide couples C54 to C64. Residues 82-102 (AMMVTSSAISSLACIISVVGM) form a helical membrane-spanning segment. The Cytoplasmic portion of the chain corresponds to 103–116 (RCTVFCQESRAKDR). The helical transmembrane segment at 117-137 (VAVAGGVFFILGGLLGFIPVA) threads the bilayer. Residues 138–162 (WNLHGILRDFYSPLVPDSMKFEIGE) lie on the Extracellular side of the membrane. Residues 163-183 (ALYLGIISSLFSLIAGIILCF) form a helical membrane-spanning segment. The Cytoplasmic segment spans residues 184 to 230 (SCSSQRNRSNYYDAYQAQPLATRSSPRPGQPPKVKSEFNSYSLTGYV). Residues 205 to 230 (TRSSPRPGQPPKVKSEFNSYSLTGYV) form a disordered region. Residue K218 forms a Glycyl lysine isopeptide (Lys-Gly) (interchain with G-Cter in SUMO) linkage. Phosphoserine occurs at positions 219 and 223. The segment covering 220 to 230 (EFNSYSLTGYV) has biased composition (polar residues). An interactions with TJP1, TJP2 and TJP3 region spans residues 229-230 (YV).

The protein belongs to the claudin family. As to quaternary structure, can form homo- and heteropolymers with other claudins to mediate paracellular barrier and channel functions of tight junctions in response to physiological stimuli. Homopolymers interact with CLDN3, but not CLDN1, homopolymers. Directly interacts with TJP1/ZO-1, TJP2/ZO-2 and TJP3/ZO-3. The disulfide bond is necessary for pore formation, but is not required for correct protein trafficking.

The protein resides in the cell junction. The protein localises to the tight junction. Its subcellular location is the cell membrane. It carries out the reaction Na(+)(in) = Na(+)(out). It catalyses the reaction K(+)(in) = K(+)(out). The catalysed reaction is Rb(+)(in) = Rb(+)(out). The enzyme catalyses Li(+)(in) = Li(+)(out). It carries out the reaction Cs(+)(in) = Cs(+)(out). It catalyses the reaction Ca(2+)(in) = Ca(2+)(out). The catalysed reaction is methylamine(out) = methylamine(in). The enzyme catalyses choline(out) = choline(in). It carries out the reaction H2O(in) = H2O(out). Its function is as follows. Forms paracellular channels: polymerizes in tight junction strands with cation- and water-selective channels through the strands, conveying epithelial permeability in a process known as paracellular tight junction permeability. In intestinal epithelium, allows for sodium and water fluxes from the peritoneal side to the lumen of the intestine to regulate nutrient absorption and clear enteric pathogens as part of mucosal immune response. In kidney, allows passive sodium and calcium reabsorption across proximal tubules from the lumen back to the bloodstream. In the hepatobiliary tract, allows paracellular water and cation fluxes in the hepatic perivenous areas and biliary epithelium to generate bile flow and maintain osmotic gradients. The sequence is that of Claudin-2 from Homo sapiens (Human).